We begin with the raw amino-acid sequence, 366 residues long: Aminomethyltransferase (366 aa).

This sequence belongs to the GcvT family. As to quaternary structure, the glycine cleavage system is composed of four proteins: P, T, L and H.

It catalyses the reaction N(6)-[(R)-S(8)-aminomethyldihydrolipoyl]-L-lysyl-[protein] + (6S)-5,6,7,8-tetrahydrofolate = N(6)-[(R)-dihydrolipoyl]-L-lysyl-[protein] + (6R)-5,10-methylene-5,6,7,8-tetrahydrofolate + NH4(+). The glycine cleavage system catalyzes the degradation of glycine. The protein is Aminomethyltransferase of Bacillus cereus (strain 03BB102).